A 264-amino-acid polypeptide reads, in one-letter code: Thymidylate synthase 2 (264 aa).

Arg21 is a dUMP binding site. His51 serves as a coordination point for (6R)-5,10-methylene-5,6,7,8-tetrahydrofolate. 126 to 127 (RR) contributes to the dUMP binding site. Cys146 acts as the Nucleophile in catalysis. DUMP contacts are provided by residues 166 to 169 (RSAD), Asn177, and 207 to 209 (HIY). Asp169 contributes to the (6R)-5,10-methylene-5,6,7,8-tetrahydrofolate binding site. (6R)-5,10-methylene-5,6,7,8-tetrahydrofolate is bound at residue Ser263.

This sequence belongs to the thymidylate synthase family. Bacterial-type ThyA subfamily. As to quaternary structure, homodimer.

It localises to the cytoplasm. It carries out the reaction dUMP + (6R)-5,10-methylene-5,6,7,8-tetrahydrofolate = 7,8-dihydrofolate + dTMP. The protein operates within pyrimidine metabolism; dTTP biosynthesis. Its function is as follows. Catalyzes the reductive methylation of 2'-deoxyuridine-5'-monophosphate (dUMP) to 2'-deoxythymidine-5'-monophosphate (dTMP) while utilizing 5,10-methylenetetrahydrofolate (mTHF) as the methyl donor and reductant in the reaction, yielding dihydrofolate (DHF) as a by-product. This enzymatic reaction provides an intracellular de novo source of dTMP, an essential precursor for DNA biosynthesis. The protein is Thymidylate synthase 2 of Bacillus subtilis (strain 168).